Here is a 21-residue protein sequence, read N- to C-terminus: Basic phospholipase A2 BjIV (21 aa).

This sequence belongs to the phospholipase A2 family. Group II subfamily. In terms of assembly, can form dimers, trimers and tetramers. The cofactor is Ca(2+). Post-translationally, contains seven disulfide bonds. As to expression, expressed by the venom gland.

The protein resides in the secreted. It carries out the reaction a 1,2-diacyl-sn-glycero-3-phosphocholine + H2O = a 1-acyl-sn-glycero-3-phosphocholine + a fatty acid + H(+). Inhibited by crotapotin. Snake venom phospholipase A2 has a high enzymatic activity and produces moderate myonecrosis in skeletal muscle, but shows no neuromuscular activity in mouse phrenic nerve-diaphragm preparations. PLA2 catalyzes the calcium-dependent hydrolysis of the 2-acyl groups in 3-sn-phosphoglycerides. The protein is Basic phospholipase A2 BjIV of Bothrops jararacussu (Jararacussu).